The following is a 159-amino-acid chain: Crossover junction endodeoxyribonuclease RuvC (159 aa).

Residues Asp7, Glu67, and Asp139 contribute to the active site. Asp7, Glu67, and Asp139 together coordinate Mg(2+).

It belongs to the RuvC family. In terms of assembly, homodimer which binds Holliday junction (HJ) DNA. The HJ becomes 2-fold symmetrical on binding to RuvC with unstacked arms; it has a different conformation from HJ DNA in complex with RuvA. In the full resolvosome a probable DNA-RuvA(4)-RuvB(12)-RuvC(2) complex forms which resolves the HJ. Mg(2+) serves as cofactor.

Its subcellular location is the cytoplasm. It catalyses the reaction Endonucleolytic cleavage at a junction such as a reciprocal single-stranded crossover between two homologous DNA duplexes (Holliday junction).. Functionally, the RuvA-RuvB-RuvC complex processes Holliday junction (HJ) DNA during genetic recombination and DNA repair. Endonuclease that resolves HJ intermediates. Cleaves cruciform DNA by making single-stranded nicks across the HJ at symmetrical positions within the homologous arms, yielding a 5'-phosphate and a 3'-hydroxyl group; requires a central core of homology in the junction. The consensus cleavage sequence is 5'-(A/T)TT(C/G)-3'. Cleavage occurs on the 3'-side of the TT dinucleotide at the point of strand exchange. HJ branch migration catalyzed by RuvA-RuvB allows RuvC to scan DNA until it finds its consensus sequence, where it cleaves and resolves the cruciform DNA. In Thermosynechococcus vestitus (strain NIES-2133 / IAM M-273 / BP-1), this protein is Crossover junction endodeoxyribonuclease RuvC.